Reading from the N-terminus, the 382-residue chain is B3 domain-containing protein Os03g0622100 (382 aa).

Residues 29 to 123 constitute a DNA-binding region (TF-B3 1); it reads CKHFLTYMVG…SFDVLIFDPS (95 aa). Basic and acidic residues-rich tracts occupy residues 136–158 and 193–202; these read RGFGREEKSAGAEGGGRDGDKNG and QDHREEKKEG. Residues 136-222 form a disordered region; sequence RGFGREEKSA…EDVDKDGEDR (87 aa). Residues 203–218 are compositionally biased toward acidic residues; the sequence is DDEDEDEDEDEDVDKD. The segment at residues 261-363 is a DNA-binding region (TF-B3 2); it reads KVIHASHLLS…AGDRLRRRPR (103 aa).

Its subcellular location is the nucleus. This Oryza sativa subsp. japonica (Rice) protein is B3 domain-containing protein Os03g0622100.